The chain runs to 310 residues: Phosphoribosylaminoimidazole-succinocarboxamide synthase (310 aa).

This sequence belongs to the SAICAR synthetase family.

The catalysed reaction is 5-amino-1-(5-phospho-D-ribosyl)imidazole-4-carboxylate + L-aspartate + ATP = (2S)-2-[5-amino-1-(5-phospho-beta-D-ribosyl)imidazole-4-carboxamido]succinate + ADP + phosphate + 2 H(+). The protein operates within purine metabolism; IMP biosynthesis via de novo pathway; 5-amino-1-(5-phospho-D-ribosyl)imidazole-4-carboxamide from 5-amino-1-(5-phospho-D-ribosyl)imidazole-4-carboxylate: step 1/2. In Xanthomonas axonopodis pv. citri (strain 306), this protein is Phosphoribosylaminoimidazole-succinocarboxamide synthase.